A 53-amino-acid polypeptide reads, in one-letter code: 20 kDa chaperonin (53 aa).

Cpn-10 domain stretches follow at residues Tyr1 to Arg10 and Val11 to Pro53.

This sequence belongs to the GroES chaperonin family. As to quaternary structure, forms stable complexes with cpn60 in the presence of ATP. Homotetramer.

The protein localises to the plastid. The protein resides in the chloroplast. Its function is as follows. Seems to function only as a co-chaperone, along with cpn60, and in certain cases is essential for the discharge of biologically active proteins from cpn60. This chain is 20 kDa chaperonin, found in Populus euphratica (Euphrates poplar).